The primary structure comprises 318 residues: DNA-directed RNA polymerase subunit alpha (318 aa).

The interval 1–232 (MAHQRIVGPT…NLFSPLQNVR (232 aa)) is alpha N-terminal domain (alpha-NTD). The segment at 246 to 318 (KMTEVLVEEL…HLPKEKFTKD (73 aa)) is alpha C-terminal domain (alpha-CTD).

Belongs to the RNA polymerase alpha chain family. As to quaternary structure, in plastids the minimal PEP RNA polymerase catalytic core is composed of four subunits: alpha, beta, beta', and beta''. When a (nuclear-encoded) sigma factor is associated with the core the holoenzyme is formed, which can initiate transcription.

Its subcellular location is the plastid. It localises to the chloroplast. It carries out the reaction RNA(n) + a ribonucleoside 5'-triphosphate = RNA(n+1) + diphosphate. Functionally, DNA-dependent RNA polymerase catalyzes the transcription of DNA into RNA using the four ribonucleoside triphosphates as substrates. This chain is DNA-directed RNA polymerase subunit alpha, found in Chlorokybus atmophyticus (Soil alga).